The chain runs to 354 residues: GDSL esterase/lipase At3g09930 (354 aa).

The signal sequence occupies residues 1–24 (MELPKLLISLFLFSFSSFFLGAES). The active-site Nucleophile is serine 46. N-linked (GlcNAc...) asparagine glycans are attached at residues asparagine 133, asparagine 233, asparagine 237, asparagine 256, and asparagine 300. Active-site residues include aspartate 329 and histidine 332.

It belongs to the 'GDSL' lipolytic enzyme family.

It is found in the secreted. The polypeptide is GDSL esterase/lipase At3g09930 (Arabidopsis thaliana (Mouse-ear cress)).